The sequence spans 58 residues: Galectin-1 (58 aa).

In terms of domain architecture, Galectin spans 2 to 58 (GITXTSLHVAPGARLAVKGDIPAGAKSWVINLGKGENDIMLHFNARFDAHGDIRTIV). A beta-D-galactoside is bound by residues 43-47 (HFNAR) and H51.

In terms of assembly, monomer. Detected in most tissues, most abundantly in skin.

The protein localises to the secreted. The protein resides in the extracellular space. It localises to the extracellular matrix. Functionally, may regulate cell apoptosis and cell differentiation. Binds beta-galactoside and a wide array of complex carbohydrates. The protein is Galectin-1 of Podarcis hispanicus (Iberian wall lizard).